We begin with the raw amino-acid sequence, 377 residues long: Mitogen-activated protein kinase mpkC (377 aa).

One can recognise a Protein kinase domain in the interval 20-299 (YVNPQPIGMG…AQDALRHPYL (280 aa)). Residues 26–34 (IGMGSFGLV) and K49 each bind ATP. D141 acts as the Proton acceptor in catalysis. Residue T171 is modified to Phosphothreonine. The short motif at 171-173 (TGY) is the TXY element. Residue Y173 is modified to Phosphotyrosine.

It belongs to the protein kinase superfamily. Ser/Thr protein kinase family. MAP kinase subfamily. HOG1 sub-subfamily. It depends on Mg(2+) as a cofactor. Post-translationally, dually phosphorylated on Thr-171 and Tyr-173, which activates the enzyme.

It carries out the reaction L-seryl-[protein] + ATP = O-phospho-L-seryl-[protein] + ADP + H(+). The catalysed reaction is L-threonyl-[protein] + ATP = O-phospho-L-threonyl-[protein] + ADP + H(+). Activated by tyrosine and threonine phosphorylation. Its function is as follows. Mitogen-activated protein kinase required for growth on media where sorbitol or mannitol is the sole carbon source. This chain is Mitogen-activated protein kinase mpkC (mpkc), found in Neosartorya fischeri (strain ATCC 1020 / DSM 3700 / CBS 544.65 / FGSC A1164 / JCM 1740 / NRRL 181 / WB 181) (Aspergillus fischerianus).